Reading from the N-terminus, the 44-residue chain is Thymosin beta-10 (44 aa).

It belongs to the thymosin beta family.

Its subcellular location is the cytoplasm. It is found in the cytoskeleton. Its function is as follows. Plays an important role in the organization of the cytoskeleton. Binds to and sequesters actin monomers (G actin) and therefore inhibits actin polymerization. The chain is Thymosin beta-10 from Torpedo marmorata (Marbled electric ray).